The primary structure comprises 158 residues: Small ribosomal subunit protein uS7 (158 aa).

It belongs to the universal ribosomal protein uS7 family. As to quaternary structure, part of the 30S ribosomal subunit. Contacts proteins S9 and S11.

One of the primary rRNA binding proteins, it binds directly to 16S rRNA where it nucleates assembly of the head domain of the 30S subunit. Is located at the subunit interface close to the decoding center, probably blocks exit of the E-site tRNA. This is Small ribosomal subunit protein uS7 from Porphyromonas gingivalis (strain ATCC BAA-308 / W83).